Reading from the N-terminus, the 243-residue chain is Uridylate kinase (243 aa).

15 to 18 (KLSG) contributes to the ATP binding site. The involved in allosteric activation by GTP stretch occupies residues 23-28 (GEEGFG). G57 provides a ligand contact to UMP. G58 and R62 together coordinate ATP. Residues D77 and 138 to 145 (TGNPFCTT) each bind UMP. Residues T165, Y171, and D174 each coordinate ATP.

Belongs to the UMP kinase family. Homohexamer.

It is found in the cytoplasm. It carries out the reaction UMP + ATP = UDP + ADP. Its pathway is pyrimidine metabolism; CTP biosynthesis via de novo pathway; UDP from UMP (UMPK route): step 1/1. Its activity is regulated as follows. Allosterically activated by GTP. Inhibited by UTP. In terms of biological role, catalyzes the reversible phosphorylation of UMP to UDP. In Shewanella denitrificans (strain OS217 / ATCC BAA-1090 / DSM 15013), this protein is Uridylate kinase.